A 287-amino-acid polypeptide reads, in one-letter code: AA14 family lytic polysaccharide monooxygenase A (287 aa).

Residues 1 to 18 (MLRILTLSILATSKLASA) form the signal peptide. N-linked (GlcNAc...) asparagine glycosylation is found at Asn-33, Asn-83, and Asn-137. 3 disulfides stabilise this stretch: Cys-188/Cys-193, Cys-195/Cys-216, and Cys-236/Cys-243. The N-linked (GlcNAc...) asparagine glycan is linked to Asn-238.

Belongs to the polysaccharide monooxygenase AA14 family. Cu(2+) is required as a cofactor.

Its subcellular location is the secreted. Lytic polysaccharide monooxygenase (LPMO) that has a broad substrate specificity with strong oxidative activity on pure amorphous cellulose and xyloglucan and plays as a bifunctional enzyme to decompose some specific network structures formed between cellulose and hemicellulose in the plant cell walls. Catalysis by LPMOs requires the reduction of the active-site copper from Cu(II) to Cu(I) by a reducing agent and H(2)O(2) or O(2) as a cosubstrate. Simultaneously oxidizes cellulose, xylan and xyloglucan in natural hemi/cellulosic substrate such as fibrillated eucalyptus pulp, and releases native and oxidized cello-oligosaccharides, xylo-oligosaccharides and xyloglucan oligosaccharides from this substrate. The cellulolytic/hemicellulolytic activity becomes weaker as the contents of xylan increase in the alkaline-extracted hemi/cellulosic substrates. The chain is AA14 family lytic polysaccharide monooxygenase A from Talaromyces rugulosus (Penicillium rugulosum).